A 362-amino-acid polypeptide reads, in one-letter code: Phospho-N-acetylmuramoyl-pentapeptide-transferase (362 aa).

10 helical membrane-spanning segments follow: residues 28 to 48 (GAVLTALIVAFLVGPRIIAWL), 75 to 95 (TMGGFMILLALSVSTLLWADL), 100 to 120 (VWIVLLVTLGYGLIGFWDDYL), 134 to 154 (AKLVAEIAIALAAAAWVWSLQ), 170 to 190 (VLLQLSWFYLPFAVFIIVGAG), 201 to 221 (GLAIVPVMIASGVFAIFSYLV), 241 to 261 (LAVFCGALVGAGLGFLWFNAP), 265 to 285 (VFMGDTGSLALGGALGAISVV), 290 to 310 (LVLGIVGGLFVLETVSVIVQV), and 339 to 359 (TVVIRFWIIATILALAGLATL).

This sequence belongs to the glycosyltransferase 4 family. MraY subfamily. Mg(2+) serves as cofactor.

Its subcellular location is the cell inner membrane. It carries out the reaction UDP-N-acetyl-alpha-D-muramoyl-L-alanyl-gamma-D-glutamyl-meso-2,6-diaminopimeloyl-D-alanyl-D-alanine + di-trans,octa-cis-undecaprenyl phosphate = di-trans,octa-cis-undecaprenyl diphospho-N-acetyl-alpha-D-muramoyl-L-alanyl-D-glutamyl-meso-2,6-diaminopimeloyl-D-alanyl-D-alanine + UMP. It participates in cell wall biogenesis; peptidoglycan biosynthesis. Its function is as follows. Catalyzes the initial step of the lipid cycle reactions in the biosynthesis of the cell wall peptidoglycan: transfers peptidoglycan precursor phospho-MurNAc-pentapeptide from UDP-MurNAc-pentapeptide onto the lipid carrier undecaprenyl phosphate, yielding undecaprenyl-pyrophosphoryl-MurNAc-pentapeptide, known as lipid I. The protein is Phospho-N-acetylmuramoyl-pentapeptide-transferase of Paramagnetospirillum magneticum (strain ATCC 700264 / AMB-1) (Magnetospirillum magneticum).